We begin with the raw amino-acid sequence, 72 residues long: Potassium channel toxin epsilon-KTx 1.1 (72 aa).

Residues 1–30 (MKLSCGFLLILLVLSAMIATFSEVEAMKPS) form the signal peptide. Cystine bridges form between Cys34/Cys42, Cys37/Cys58, Cys41/Cys51, and Cys46/Cys56. A propeptide spanning residues 60-72 (GRSDLNDELEKYQ) is cleaved from the precursor.

This sequence belongs to the short scorpion toxin superfamily. Potassium channel inhibitor family. Epsilon-KTx 01 subfamily. Expressed by the venom gland.

The protein resides in the secreted. Functionally, potassium channel blocker. At 3 uM, this toxin blocks voltage-independently voltage-gated potassium channels rKv1.2/KCNA2 (25%), hKv1.3/KCNA3 (27%), rKv4.2/KCND2 (25%), Kv10.1/KCNH1/EAG1 (15%), Kv11/hERG (12%), and Shaker-IR (10%). On hKv1.3/KCNA3, the IC(50) is 17.1 +-3.3 uM. This Tityus serrulatus (Brazilian scorpion) protein is Potassium channel toxin epsilon-KTx 1.1.